Here is a 198-residue protein sequence, read N- to C-terminus: Nucleoid occlusion factor SlmA (198 aa).

An HTH tetR-type domain is found at 10–70 (NRREEILQSL…SLIEFIEDSL (61 aa)). The H-T-H motif DNA-binding region spans 33–52 (TTAKLAASVGVSEAALYRHF). Residues 117 to 144 (EQDRLQGRINQLFERIEAQLRQVLREKR) adopt a coiled-coil conformation.

The protein belongs to the nucleoid occlusion factor SlmA family. As to quaternary structure, homodimer. Interacts with FtsZ.

It localises to the cytoplasm. The protein resides in the nucleoid. In terms of biological role, required for nucleoid occlusion (NO) phenomenon, which prevents Z-ring formation and cell division over the nucleoid. Acts as a DNA-associated cell division inhibitor that binds simultaneously chromosomal DNA and FtsZ, and disrupts the assembly of FtsZ polymers. SlmA-DNA-binding sequences (SBS) are dispersed on non-Ter regions of the chromosome, preventing FtsZ polymerization at these regions. The protein is Nucleoid occlusion factor SlmA of Salmonella dublin (strain CT_02021853).